We begin with the raw amino-acid sequence, 226 residues long: Eukaryotic translation initiation factor 3 subunit K (226 aa).

Positions 44-202 constitute a PCI domain; the sequence is YSLEVNLCLL…IVLPQNEFNH (159 aa).

The protein belongs to the eIF-3 subunit K family. As to quaternary structure, component of the eukaryotic translation initiation factor 3 (eIF-3) complex.

The protein localises to the cytoplasm. Component of the eukaryotic translation initiation factor 3 (eIF-3) complex, which is involved in protein synthesis of a specialized repertoire of mRNAs and, together with other initiation factors, stimulates binding of mRNA and methionyl-tRNAi to the 40S ribosome. The eIF-3 complex specifically targets and initiates translation of a subset of mRNAs involved in cell proliferation. This is Eukaryotic translation initiation factor 3 subunit K (TIF3K1) from Arabidopsis thaliana (Mouse-ear cress).